A 687-amino-acid polypeptide reads, in one-letter code: MTAVSPDYLVVLFTTTAGANGSKLGSDEKEVIQLLWKVINLANKKVGELHEVTVRPDHLELTEECKEITRIEADSLYVAPQLEQALQQFNQSVGNELNIGVGTSFCICTDGQLHIRQVLHPEASKKNILLPECFYSFFDLRKEFLKCCPGSSDTNELDVHAMASYLGFEKKSTRYRYGASEVDDMGDIIVTLISEPYNYKFSDPERVNYKFESGTCSKLEIIDDNTIIRARGLPWQSSDQDIARFFKGLNIAKGGAALCLNAQGRRNGEALVRFVSEEHRDLALQRHKHHMGNRYIEVYKATGEDFLKIAGGTSNEVAQFLSKENQVIVRMRGLPFTATAEEVLAFFGQQCPVTGGKEGILFVTYPDNRPTGDAFVLFACEEYAQNALKKHKELLGKRYIELFRSTAAEVQQVLNRYSSAPLIPLPTPPIIPVLPQPFIPPVNVRDCIRLRGLPYAATIEDILEFLGEFSADIRTHGVHMVLNHQGRPSGDSFIQMKSADRAYLAAQKCHKKTMKDRYVEVFQCSAEEMNFVLMGGTLNRNGLSPPPCKLPCLSPPSYTFPAQAAVIPTEAAALYQPSLLLNPRSLQPSAAYYPAGAQLFMNYTAYYPSPPGSPSSLGFFPASASVSSIPPHNTGAMVRMQGLAYNSGVKEILNFFQGYQYSPEDGLLPVNDQARALLTHPKEWVCI.

RRM domains follow at residues 226–303, 327–407, and 446–526; these read TIIR…KATG, VIVR…RSTA, and DCIR…QCSA.

Belongs to the ESRP family.

The protein localises to the nucleus. Functionally, mRNA splicing factor that regulates the formation of epithelial cell-specific isoforms. Specifically regulates the expression of FGFR2-IIIb, an epithelial cell-specific isoform of fgfr2. Acts by directly binding specific sequences in mRNAs. Binds the GU-rich sequence motifs in the ISE/ISS-3, a cis-element regulatory region present in the mRNA of fgfr2. The polypeptide is Epithelial splicing regulatory protein 1 (esrp1) (Xenopus tropicalis (Western clawed frog)).